A 195-amino-acid polypeptide reads, in one-letter code: Small ribosomal subunit protein eS7 (195 aa).

Phosphothreonine is present on residues Thr-146 and Thr-151. 2 positions are modified to phosphoserine: Ser-172 and Ser-173.

It belongs to the eukaryotic ribosomal protein eS7 family. As to quaternary structure, component of the small ribosomal subunit (SSU). Mature yeast ribosomes consist of a small (40S) and a large (60S) subunit. The 40S small subunit contains 1 molecule of ribosomal RNA (18S rRNA) and at least 33 different proteins. The large 60S subunit contains 3 rRNA molecules (25S, 5.8S and 5S rRNA) and at least 46 different proteins. Interacts with snoRNA U3. uS11 interacts with MPP10. Component of the ribosomal small subunit (SSU) processome composed of at least 40 protein subunits and snoRNA U3.

Its subcellular location is the cytoplasm. It is found in the nucleus. The protein localises to the nucleolus. Component of the ribosome, a large ribonucleoprotein complex responsible for the synthesis of proteins in the cell. The small ribosomal subunit (SSU) binds messenger RNAs (mRNAs) and translates the encoded message by selecting cognate aminoacyl-transfer RNA (tRNA) molecules. The large subunit (LSU) contains the ribosomal catalytic site termed the peptidyl transferase center (PTC), which catalyzes the formation of peptide bonds, thereby polymerizing the amino acids delivered by tRNAs into a polypeptide chain. The nascent polypeptides leave the ribosome through a tunnel in the LSU and interact with protein factors that function in enzymatic processing, targeting, and the membrane insertion of nascent chains at the exit of the ribosomal tunnel. eS7 is involved in nucleolar processing of pre-18S ribosomal RNA and ribosome assembly. This Schizosaccharomyces pombe (strain 972 / ATCC 24843) (Fission yeast) protein is Small ribosomal subunit protein eS7 (rps7).